Consider the following 258-residue polypeptide: 5'-nucleotidase SurE (258 aa).

Residues Asp18, Asp19, Ser49, and Asn102 each coordinate a divalent metal cation.

Belongs to the SurE nucleotidase family. A divalent metal cation serves as cofactor.

The protein resides in the cytoplasm. It carries out the reaction a ribonucleoside 5'-phosphate + H2O = a ribonucleoside + phosphate. In terms of biological role, nucleotidase that shows phosphatase activity on nucleoside 5'-monophosphates. In Vibrio parahaemolyticus serotype O3:K6 (strain RIMD 2210633), this protein is 5'-nucleotidase SurE.